A 215-amino-acid polypeptide reads, in one-letter code: Orotate phosphoribosyltransferase (215 aa).

Lys26 contacts 5-phospho-alpha-D-ribose 1-diphosphate. 34-35 (FF) serves as a coordination point for orotate. Residues 72-73 (YK), Arg99, Lys100, Lys103, His105, and 124-132 (DDVITAGTA) contribute to the 5-phospho-alpha-D-ribose 1-diphosphate site. Positions 128 and 156 each coordinate orotate.

Belongs to the purine/pyrimidine phosphoribosyltransferase family. PyrE subfamily. Homodimer. Mg(2+) is required as a cofactor.

It carries out the reaction orotidine 5'-phosphate + diphosphate = orotate + 5-phospho-alpha-D-ribose 1-diphosphate. Its pathway is pyrimidine metabolism; UMP biosynthesis via de novo pathway; UMP from orotate: step 1/2. Catalyzes the transfer of a ribosyl phosphate group from 5-phosphoribose 1-diphosphate to orotate, leading to the formation of orotidine monophosphate (OMP). The polypeptide is Orotate phosphoribosyltransferase (Stutzerimonas stutzeri (strain A1501) (Pseudomonas stutzeri)).